Reading from the N-terminus, the 631-residue chain is 1-deoxy-D-xylulose-5-phosphate synthase (631 aa).

Thiamine diphosphate-binding positions include histidine 87 and 128-130 (GHS). Mg(2+) is bound at residue aspartate 159. Residues 160–161 (GA), asparagine 188, phenylalanine 295, and glutamate 377 contribute to the thiamine diphosphate site. Mg(2+) is bound at residue asparagine 188.

Belongs to the transketolase family. DXPS subfamily. As to quaternary structure, homodimer. Mg(2+) serves as cofactor. Thiamine diphosphate is required as a cofactor.

It catalyses the reaction D-glyceraldehyde 3-phosphate + pyruvate + H(+) = 1-deoxy-D-xylulose 5-phosphate + CO2. Its pathway is metabolic intermediate biosynthesis; 1-deoxy-D-xylulose 5-phosphate biosynthesis; 1-deoxy-D-xylulose 5-phosphate from D-glyceraldehyde 3-phosphate and pyruvate: step 1/1. In terms of biological role, catalyzes the acyloin condensation reaction between C atoms 2 and 3 of pyruvate and glyceraldehyde 3-phosphate to yield 1-deoxy-D-xylulose-5-phosphate (DXP). The sequence is that of 1-deoxy-D-xylulose-5-phosphate synthase from Pseudomonas putida (strain ATCC 47054 / DSM 6125 / CFBP 8728 / NCIMB 11950 / KT2440).